Consider the following 747-residue polypeptide: Catalase-peroxidase (747 aa).

The first 27 residues, 1–27, serve as a signal peptide directing secretion; it reads MRKFSVSKVALLAATMAPALLPAAARA. The tryptophyl-tyrosyl-methioninium (Trp-Tyr) (with M-264) cross-link spans 116 to 238; that stretch reads WHSAGTYRTA…LAAVQMGLIY (123 aa). The active-site Proton acceptor is His117. Residues 238-264 constitute a cross-link (tryptophyl-tyrosyl-methioninium (Tyr-Met) (with W-116)); the sequence is YVNPEGPNGNPDPLLAAKDIRETFGRM. Heme b is bound at residue His279.

Belongs to the peroxidase family. Peroxidase/catalase subfamily. Homodimer or homotetramer. Heme b is required as a cofactor. Formation of the three residue Trp-Tyr-Met cross-link is important for the catalase, but not the peroxidase activity of the enzyme.

It carries out the reaction H2O2 + AH2 = A + 2 H2O. The catalysed reaction is 2 H2O2 = O2 + 2 H2O. Bifunctional enzyme with both catalase and broad-spectrum peroxidase activity. This is Catalase-peroxidase from Novosphingobium aromaticivorans (strain ATCC 700278 / DSM 12444 / CCUG 56034 / CIP 105152 / NBRC 16084 / F199).